The chain runs to 415 residues: Serine hydroxymethyltransferase (415 aa).

(6S)-5,6,7,8-tetrahydrofolate contacts are provided by residues leucine 117 and 121-123 (GHL). Lysine 226 is modified (N6-(pyridoxal phosphate)lysine).

It belongs to the SHMT family. Homodimer. It depends on pyridoxal 5'-phosphate as a cofactor.

The protein localises to the cytoplasm. The catalysed reaction is (6R)-5,10-methylene-5,6,7,8-tetrahydrofolate + glycine + H2O = (6S)-5,6,7,8-tetrahydrofolate + L-serine. It participates in one-carbon metabolism; tetrahydrofolate interconversion. The protein operates within amino-acid biosynthesis; glycine biosynthesis; glycine from L-serine: step 1/1. Catalyzes the reversible interconversion of serine and glycine with tetrahydrofolate (THF) serving as the one-carbon carrier. This reaction serves as the major source of one-carbon groups required for the biosynthesis of purines, thymidylate, methionine, and other important biomolecules. Also exhibits THF-independent aldolase activity toward beta-hydroxyamino acids, producing glycine and aldehydes, via a retro-aldol mechanism. This chain is Serine hydroxymethyltransferase, found in Dehalococcoides mccartyi (strain ATCC BAA-2266 / KCTC 15142 / 195) (Dehalococcoides ethenogenes (strain 195)).